We begin with the raw amino-acid sequence, 325 residues long: NADH-quinone oxidoreductase subunit H (325 aa).

Transmembrane regions (helical) follow at residues 11–31 (ILLSILKAVVILLVVVTCGAF), 50–69 (NRVGWGGSLQLVADMIKMFF), 81–101 (VIFTLAPMIAFTSLLLAFAIV), 114–134 (IGILFFLMMAGLAVYAVLFAG), 154–174 (LSYEVFLGLSLMGVVAQAGSF), 186–206 (IWNVIPQFFGFVTFAIAGVAV), 237–257 (FFVGEYIGIVTISALMVTLFF), 265–285 (LPPFIWFALKTAFFMMMFILI), and 304–324 (VCLPLTLINLLVTAAVILWQA).

Belongs to the complex I subunit 1 family. As to quaternary structure, NDH-1 is composed of 13 different subunits. Subunits NuoA, H, J, K, L, M, N constitute the membrane sector of the complex.

It is found in the cell inner membrane. It catalyses the reaction a quinone + NADH + 5 H(+)(in) = a quinol + NAD(+) + 4 H(+)(out). In terms of biological role, NDH-1 shuttles electrons from NADH, via FMN and iron-sulfur (Fe-S) centers, to quinones in the respiratory chain. The immediate electron acceptor for the enzyme in this species is believed to be ubiquinone. Couples the redox reaction to proton translocation (for every two electrons transferred, four hydrogen ions are translocated across the cytoplasmic membrane), and thus conserves the redox energy in a proton gradient. This subunit may bind ubiquinone. This is NADH-quinone oxidoreductase subunit H from Citrobacter koseri (strain ATCC BAA-895 / CDC 4225-83 / SGSC4696).